Reading from the N-terminus, the 431-residue chain is UDP-N-acetylmuramoylalanine--D-glutamate ligase (431 aa).

Glycine 111–threonine 117 contributes to the ATP binding site.

This sequence belongs to the MurCDEF family.

Its subcellular location is the cytoplasm. It catalyses the reaction UDP-N-acetyl-alpha-D-muramoyl-L-alanine + D-glutamate + ATP = UDP-N-acetyl-alpha-D-muramoyl-L-alanyl-D-glutamate + ADP + phosphate + H(+). It functions in the pathway cell wall biogenesis; peptidoglycan biosynthesis. In terms of biological role, cell wall formation. Catalyzes the addition of glutamate to the nucleotide precursor UDP-N-acetylmuramoyl-L-alanine (UMA). This Petrotoga mobilis (strain DSM 10674 / SJ95) protein is UDP-N-acetylmuramoylalanine--D-glutamate ligase.